Consider the following 183-residue polypeptide: Guanylate kinase (183 aa).

The Guanylate kinase-like domain maps to 4-182 (GRVVVLTGPS…AITALEAAIF (179 aa)). Residue 11–18 (GPSGVGKG) coordinates ATP.

It belongs to the guanylate kinase family.

The protein localises to the cytoplasm. The enzyme catalyses GMP + ATP = GDP + ADP. It catalyses the reaction dZMP + ATP = dZDP + ADP. Its pathway is purine metabolism. Essential for recycling GMP and indirectly, cGMP. In terms of biological role, (Microbial infection) Catalyzes the phosphorylation of dZMP to dZDP, when the bacterium is infected by a phage that produces the substrate for the synthesis of dZTP (2- amino-2'-deoxyadenosine 5'-triphosphate), which is then used by the phage as a DNA polymerase substrate. In Synechococcus sp. (strain ATCC 27144 / PCC 6301 / SAUG 1402/1) (Anacystis nidulans), this protein is Guanylate kinase.